We begin with the raw amino-acid sequence, 283 residues long: Thymidylate synthase (283 aa).

Arg-22 is a binding site for dUMP. Residue Cys-160 is the Nucleophile of the active site. Residues Arg-180 to Asp-183, Asn-191, and His-221 to Tyr-223 each bind dUMP. Asp-183 is a (6R)-5,10-methylene-5,6,7,8-tetrahydrofolate binding site. Ser-282 contributes to the (6R)-5,10-methylene-5,6,7,8-tetrahydrofolate binding site.

The protein belongs to the thymidylate synthase family. Bacterial-type ThyA subfamily. As to quaternary structure, homodimer.

Its subcellular location is the cytoplasm. It carries out the reaction dUMP + (6R)-5,10-methylene-5,6,7,8-tetrahydrofolate = 7,8-dihydrofolate + dTMP. It functions in the pathway pyrimidine metabolism; dTTP biosynthesis. Functionally, catalyzes the reductive methylation of 2'-deoxyuridine-5'-monophosphate (dUMP) to 2'-deoxythymidine-5'-monophosphate (dTMP) while utilizing 5,10-methylenetetrahydrofolate (mTHF) as the methyl donor and reductant in the reaction, yielding dihydrofolate (DHF) as a by-product. This enzymatic reaction provides an intracellular de novo source of dTMP, an essential precursor for DNA biosynthesis. The protein is Thymidylate synthase of Shewanella loihica (strain ATCC BAA-1088 / PV-4).